The following is a 425-amino-acid chain: Serine--tRNA ligase (425 aa).

Residue 231–233 coordinates L-serine; that stretch reads TAE. Position 262-264 (262-264) interacts with ATP; the sequence is RSE. Glu285 contacts L-serine. 349-352 is a binding site for ATP; it reads EISS. Position 385 (Ser385) interacts with L-serine.

This sequence belongs to the class-II aminoacyl-tRNA synthetase family. Type-1 seryl-tRNA synthetase subfamily. As to quaternary structure, homodimer. The tRNA molecule binds across the dimer.

Its subcellular location is the cytoplasm. It catalyses the reaction tRNA(Ser) + L-serine + ATP = L-seryl-tRNA(Ser) + AMP + diphosphate + H(+). The catalysed reaction is tRNA(Sec) + L-serine + ATP = L-seryl-tRNA(Sec) + AMP + diphosphate + H(+). The protein operates within aminoacyl-tRNA biosynthesis; selenocysteinyl-tRNA(Sec) biosynthesis; L-seryl-tRNA(Sec) from L-serine and tRNA(Sec): step 1/1. Catalyzes the attachment of serine to tRNA(Ser). Is also able to aminoacylate tRNA(Sec) with serine, to form the misacylated tRNA L-seryl-tRNA(Sec), which will be further converted into selenocysteinyl-tRNA(Sec). The protein is Serine--tRNA ligase of Desulfosudis oleivorans (strain DSM 6200 / JCM 39069 / Hxd3) (Desulfococcus oleovorans).